Here is a 382-residue protein sequence, read N- to C-terminus: UDP-4-amino-4-deoxy-L-arabinose--oxoglutarate aminotransferase (382 aa).

Position 183 is an N6-(pyridoxal phosphate)lysine (Lys183).

The protein belongs to the DegT/DnrJ/EryC1 family. ArnB subfamily. Homodimer. It depends on pyridoxal 5'-phosphate as a cofactor.

The enzyme catalyses UDP-4-amino-4-deoxy-beta-L-arabinose + 2-oxoglutarate = UDP-beta-L-threo-pentopyranos-4-ulose + L-glutamate. It participates in nucleotide-sugar biosynthesis; UDP-4-deoxy-4-formamido-beta-L-arabinose biosynthesis; UDP-4-deoxy-4-formamido-beta-L-arabinose from UDP-alpha-D-glucuronate: step 2/3. The protein operates within bacterial outer membrane biogenesis; lipopolysaccharide biosynthesis. In terms of biological role, catalyzes the conversion of UDP-4-keto-arabinose (UDP-Ara4O) to UDP-4-amino-4-deoxy-L-arabinose (UDP-L-Ara4N). The modified arabinose is attached to lipid A and is required for resistance to polymyxin and cationic antimicrobial peptides. The protein is UDP-4-amino-4-deoxy-L-arabinose--oxoglutarate aminotransferase of Pseudomonas aeruginosa (strain LESB58).